A 314-amino-acid chain; its full sequence is tRNA uridine(34) hydroxylase (314 aa).

A Rhodanese domain is found at 140–234 (ARDDVILIDT…YLEETPPDES (95 aa)). Catalysis depends on Cys194, which acts as the Cysteine persulfide intermediate.

This sequence belongs to the TrhO family.

The catalysed reaction is uridine(34) in tRNA + AH2 + O2 = 5-hydroxyuridine(34) in tRNA + A + H2O. Functionally, catalyzes oxygen-dependent 5-hydroxyuridine (ho5U) modification at position 34 in tRNAs. The polypeptide is tRNA uridine(34) hydroxylase (Acinetobacter baumannii (strain AYE)).